The following is a 120-amino-acid chain: Large ribosomal subunit protein uL18 (120 aa).

It belongs to the universal ribosomal protein uL18 family. In terms of assembly, part of the 50S ribosomal subunit; part of the 5S rRNA/L5/L18/L25 subcomplex. Contacts the 5S and 23S rRNAs.

This is one of the proteins that bind and probably mediate the attachment of the 5S RNA into the large ribosomal subunit, where it forms part of the central protuberance. The protein is Large ribosomal subunit protein uL18 of Janthinobacterium sp. (strain Marseille) (Minibacterium massiliensis).